Here is a 38-residue protein sequence, read N- to C-terminus: Potassium channel toxin alpha-KTx 2.15 (38 aa).

3 disulfides stabilise this stretch: cysteine 7–cysteine 29, cysteine 13–cysteine 34, and cysteine 17–cysteine 36.

It belongs to the short scorpion toxin superfamily. Potassium channel inhibitor family. Alpha-KTx 02 subfamily. Expressed by the venom gland.

It localises to the secreted. Its function is as follows. Blocks human voltage-gated potassium channels Kv1.2/KCNA2 (IC(50)=0.3 nM), Kv1.3/KCNA3 (IC(50)=8.3 nM) and Shaker IR (with inactivation domain removed) (IC(50)=12 nM) and blocks intermediate conductance calcium-activated potassium channel KCa3.1/KCNN4 (IC(50)=6.4 nM). The chain is Potassium channel toxin alpha-KTx 2.15 from Centruroides tecomanus (Scorpion).